We begin with the raw amino-acid sequence, 250 residues long: 2,3-bisphosphoglycerate-dependent phosphoglycerate mutase (250 aa).

Residues 8–15 (RHGESTWN), 21–22 (TG), arginine 60, 87–90 (ERHY), lysine 98, and 114–115 (RR) each bind substrate. Histidine 9 functions as the Tele-phosphohistidine intermediate in the catalytic mechanism. Glutamate 87 functions as the Proton donor/acceptor in the catalytic mechanism. Residues 116 to 135 (SYDTPPPPLAANDPRSERSD) are disordered. 183 to 184 (GN) serves as a coordination point for substrate.

This sequence belongs to the phosphoglycerate mutase family. BPG-dependent PGAM subfamily. Homodimer.

The enzyme catalyses (2R)-2-phosphoglycerate = (2R)-3-phosphoglycerate. Its pathway is carbohydrate degradation; glycolysis; pyruvate from D-glyceraldehyde 3-phosphate: step 3/5. Catalyzes the interconversion of 2-phosphoglycerate and 3-phosphoglycerate. The protein is 2,3-bisphosphoglycerate-dependent phosphoglycerate mutase of Polaromonas naphthalenivorans (strain CJ2).